We begin with the raw amino-acid sequence, 123 residues long: Small ribosomal subunit protein uS12 (123 aa).

Asp89 is modified (3-methylthioaspartic acid). Positions 100-123 are disordered; it reads GSLDTSGVKGRNQGRSKYGTKRPK. Positions 111-123 are enriched in basic residues; the sequence is NQGRSKYGTKRPK.

The protein belongs to the universal ribosomal protein uS12 family. As to quaternary structure, part of the 30S ribosomal subunit. Contacts proteins S8 and S17. May interact with IF1 in the 30S initiation complex.

In terms of biological role, with S4 and S5 plays an important role in translational accuracy. Its function is as follows. Interacts with and stabilizes bases of the 16S rRNA that are involved in tRNA selection in the A site and with the mRNA backbone. Located at the interface of the 30S and 50S subunits, it traverses the body of the 30S subunit contacting proteins on the other side and probably holding the rRNA structure together. The combined cluster of proteins S8, S12 and S17 appears to hold together the shoulder and platform of the 30S subunit. The polypeptide is Small ribosomal subunit protein uS12 (Pseudomonas fluorescens (strain ATCC BAA-477 / NRRL B-23932 / Pf-5)).